Here is a 735-residue protein sequence, read N- to C-terminus: Muskelin (735 aa).

Position 2 is an N-acetylalanine (A2). The LisH domain maps to 172-204 (REQEAIRLCLKHFRQHNYTEAFESLQKKTKIAL). Residues 206-258 (HPMLTDMHDKLVLKGDFDACEELIEKAVNDGLFNQYISQQEYKPRWSQIIPKS) form the CTLH domain. Kelch repeat units follow at residues 284–330 (TVYL…SCHK), 339–391 (QIYT…FDHQ), 400–458 (MIYT…SRIG), 469–515 (CLYV…TGFT), 526–578 (EIHV…SLQE), and 597–651 (VHYL…AQMD).

In terms of assembly, homodimer; may form higher oligomers. Identified in the CTLH complex that contains GID4, RANBP9 and/or RANBP10, MKLN1, MAEA, RMND5A (or alternatively its paralog RMND5B), GID8, ARMC8, WDR26 and YPEL5. Within this complex, MAEA, RMND5A (or alternatively its paralog RMND5B), GID8, WDR26, and RANBP9 and/or RANBP10 form the catalytic core, while GID4, MKLN1, ARMC8 and YPEL5 have ancillary roles. Interacts with RANBP9. Part of a complex consisting of RANBP9, MKLN1 and GID8. Interacts with GABRA1. Interacts with the C-terminal tail of PTGER3.

Its subcellular location is the cytoplasm. The protein resides in the cell projection. It is found in the ruffle. It localises to the cell cortex. The protein localises to the synapse. Its subcellular location is the postsynapse. Its function is as follows. Component of the CTLH E3 ubiquitin-protein ligase complex that selectively accepts ubiquitin from UBE2H and mediates ubiquitination and subsequent proteasomal degradation of the transcription factor HBP1. Required for internalization of the GABA receptor GABRA1 from the cell membrane via endosomes and subsequent GABRA1 degradation. Acts as a mediator of cell spreading and cytoskeletal responses to the extracellular matrix component THBS1. This Rattus norvegicus (Rat) protein is Muskelin (Mkln1).